The primary structure comprises 908 residues: MNARIDTGNEAFSAAELATAESRASATPMMEQYIEIKANNPDSLLFYRMGDFYELFFEDALEASRALGITLTKRGQHMGQDIPMCGVPVHAADDYLQKLISLGFRVAVCEQIEDPAEAKKRGAKSVVRRDVVRLVTPGTITEEKLLSPSESNYLMALTRIRGSGEALLALAWIDISTGVFRLAETEASRLLADILRIDPRELILPDTIFHDPELKPVFDVLGRTAVPQPSVLFDSASAEGRIARYFGVATLDGFGTFSRAELAAAAAAVAYVEKTQIAERPPLGKPERESAASTLFIDPATRANLELARTLSGDRNGSLLKAIDRTVTGGGARLLAERLMSPLTDPARINARLDSIGFLIDEPLLCGNLRDTLKHVPDMPRALSRLALDRGGPRDLSAIRQGLDAAGGVAVMLGKAVLPEELGQALSELQALPATLEKLLAETLAEELPLLKRDGGFLRDGANAELDEVRALRDQSRRVIAGLQLQYAEETGIRSLKIKHNNVLGYFIEVTAGNASPMTETADAKARFIHRQTMANAMRFTTTELADLESRIANAADQALTIELEAFDRMTAAVVAEAEAIKSGARALAVIDVAAGLALLAEEQAYCRPQVDGSKMFAIESGRHPVVEQALRRQAGGPFVANHCDLSPKTGDRDGAIWLLTGPNMGGKSTFLRQNALISILAQMGSFVPATSAHIGIVDRLFSRVGASDDLARGRSTFMVEMVETAAILNQASDRSLVILDEIGRGTATFDGLSIAWAAVEHLHEANRCRGLFATHFHELTVLSEKLGRLSNATMRVKEWDGDVIFLHEVGPGAADRSYGIQVARLAGLPASVVARARDVLTRLEDADRKNPASQLIDDLPLFQVAVRREETARGASKVEEALKAMSLDDMTPREAMDALYDLKKKLK.

662–669 lines the ATP pocket; that stretch reads GPNMGGKS.

The protein belongs to the DNA mismatch repair MutS family.

Its function is as follows. This protein is involved in the repair of mismatches in DNA. It is possible that it carries out the mismatch recognition step. This protein has a weak ATPase activity. The chain is DNA mismatch repair protein MutS from Rhizobium johnstonii (strain DSM 114642 / LMG 32736 / 3841) (Rhizobium leguminosarum bv. viciae).